The following is a 666-amino-acid chain: MFMYPEFARKALSKLISKKLNIEKVSSKHQLVLLDYGLHGLLPKSLYLEAINSDILNVRFFPPEIINVTDIVKALQNSCRVDEYLKAVSLYHKNSLMVSGPNVVKLMIEYNLLTHSDLEWLINENVIKATYLLKINAYMINFKIDLTVDEIIDLVKDIPVGATLHLYNILNNLDLNIILRISDEYNIPPVHDILSKLTDEEMCIKLVTKYPMENVINFINQDVRYSPTFIKTIKDFVNAHLPTMYDGLNDYLHSVIVDKDLIEEYKIKSVAMFNLEYKTDVDTLTLDEQIFVEVNISYYDFRYRQFANEFRDYIMLKESRQITMQTGDKIRRFRRPMSLRSTIIKKDTDSLEDILSHIDNARKNSKVSIEDVDRIISSFRLNPCVVRRTMLSNIDIKTKIMVLKIAKDWKSCALTLSAIKGIMVTDTINTVLSKILHHHRNVFKYLTSVDNKEITVCNCSRCVSLFYRELKSIRCDLNTDDGLLARLYDLTRYALHGRINQNLIGQRCWGPLTEMLFNEDKKRKLNNLMVYIKISDMLVYGHSIEKTLIPITESLSFKLSVDTMSVSNDQYAKVVIFFNTIIEYIVATIYYRLAVLNNYVAIRHFVLKVLHTVMEACGVLFSHIKVNDKIEHELEEMVDKGIVPSYLHHLSINVISIILDDINGTR.

The helical transmembrane segment at Val-574–Leu-596 threads the bilayer.

It belongs to the orthopoxvirus OPG074 family.

It localises to the membrane. The chain is Protein OPG074 (OPG074) from Homo sapiens (Human).